Here is a 140-residue protein sequence, read N- to C-terminus: Protein SamA (140 aa).

Active-site for autocatalytic cleavage activity residues include S61 and K98.

This sequence belongs to the peptidase S24 family.

In terms of biological role, involved in UV protection and mutation. In Salmonella typhimurium (strain LT2 / SGSC1412 / ATCC 700720), this protein is Protein SamA (samA).